Here is a 359-residue protein sequence, read N- to C-terminus: Tropomodulin-1 (359 aa).

Positions 39–61 (PDNALLPAGLRQKDQTTKAPTGP) are disordered. Residues 39–138 (PDNALLPAGL…CDIAAILGMH (100 aa)) are tropomyosin-binding.

The protein belongs to the tropomodulin family. In terms of assembly, binds to the N-terminus of tropomyosin and to actin. Interacts with FLII.

It is found in the cytoplasm. The protein localises to the cytoskeleton. Blocks the elongation and depolymerization of the actin filaments at the pointed end. The Tmod/TM complex contributes to the formation of the short actin protofilament, which in turn defines the geometry of the membrane skeleton. May play an important role in regulating the organization of actin filaments by preferentially binding to a specific tropomyosin isoform at its N-terminus. The sequence is that of Tropomodulin-1 (TMOD1) from Bos taurus (Bovine).